A 399-amino-acid chain; its full sequence is Argininosuccinate synthase (399 aa).

8–16 (AYSGGLDTS) serves as a coordination point for ATP. Residue Y87 participates in L-citrulline binding. G117 is a binding site for ATP. 3 residues coordinate L-aspartate: T119, N123, and D124. N123 is a binding site for L-citrulline. The L-citrulline site is built by R127, S175, E260, and Y272.

This sequence belongs to the argininosuccinate synthase family. Type 1 subfamily. As to quaternary structure, homotetramer.

It is found in the cytoplasm. The catalysed reaction is L-citrulline + L-aspartate + ATP = 2-(N(omega)-L-arginino)succinate + AMP + diphosphate + H(+). It participates in amino-acid biosynthesis; L-arginine biosynthesis; L-arginine from L-ornithine and carbamoyl phosphate: step 2/3. The chain is Argininosuccinate synthase from Rhodococcus erythropolis (strain PR4 / NBRC 100887).